The sequence spans 485 residues: Glycogen synthase (485 aa).

Position 20 (Lys20) interacts with ADP-alpha-D-glucose.

This sequence belongs to the glycosyltransferase 1 family. Bacterial/plant glycogen synthase subfamily.

It catalyses the reaction [(1-&gt;4)-alpha-D-glucosyl](n) + ADP-alpha-D-glucose = [(1-&gt;4)-alpha-D-glucosyl](n+1) + ADP + H(+). The protein operates within glycan biosynthesis; glycogen biosynthesis. Synthesizes alpha-1,4-glucan chains using ADP-glucose. The chain is Glycogen synthase from Vibrio parahaemolyticus serotype O3:K6 (strain RIMD 2210633).